Reading from the N-terminus, the 872-residue chain is Potassium voltage-gated channel subfamily KQT member 3 (872 aa).

The disordered stretch occupies residues 1-43 (MGLKARRAAGAAGGGGDGGGGGGGAANPAGGDAAAAGDEERKV). Residues 1-120 (MGLKARRAAG…IYDALERPRG (120 aa)) lie on the Cytoplasmic side of the membrane. Residues 11 to 25 (AAGGGGDGGGGGGGA) show a composition bias toward gly residues. Low complexity predominate over residues 26–36 (ANPAGGDAAAA). Position 81 is a phosphothreonine (Thr81). Residues 121–143 (WALLYHALVFLIVLGCLILAVLT) traverse the membrane as a helical segment. Over 144–153 (TFKEYETVSG) the chain is Extracellular. Residues 154–175 (DWLLLLETFAIFIFGAEFALRI) form a helical membrane-spanning segment. Residues 176–193 (WAAGCCCRYKGWRGRLKF) lie on the Cytoplasmic side of the membrane. The helical transmembrane segment at 194 to 213 (ARKPLCMLDIFVLIASVPVV) threads the bilayer. Topologically, residues 214–225 (AVGNQGNVLATS) are extracellular. A helical; Voltage-sensor transmembrane segment spans residues 226–244 (LRSLRFLQILRMLRMDRRG). Arg243 serves as a coordination point for a 1,2-diacyl-sn-glycero-3-phospho-(1D-myo-inositol-4,5-bisphosphate). Residues 245-256 (GTWKLLGSAICA) lie on the Cytoplasmic side of the membrane. Thr246 is modified (phosphothreonine). Residues 257–282 (HSKELITAWYIGFLTLILSSFLVYLV) form a helical membrane-spanning segment. Lys259 contributes to the a 1,2-diacyl-sn-glycero-3-phospho-(1D-myo-inositol-4,5-bisphosphate) binding site. Topologically, residues 283–302 (EKDVPEVDAQGEEMKEEFET) are extracellular. Residues 303–315 (YADALWWGLITLA) constitute an intramembrane region (pore-forming). The Selectivity filter signature appears at 316-321 (TIGYGD). Topologically, residues 316 to 326 (TIGYGDKTPKT) are extracellular. The helical transmembrane segment at 327 to 353 (WEGRLIAATFSLIGVSFFALPAGILGS) threads the bilayer. The Cytoplasmic segment spans residues 354–872 (GLALKVQEQH…SVWTPSNKPI (519 aa)). The segment at 356 to 537 (ALKVQEQHRQ…RLYKKKFKET (182 aa)) is mediates interaction with calmodulin. Lys366 contacts a 1,2-diacyl-sn-glycero-3-phospho-(1D-myo-inositol-4,5-bisphosphate). Disordered regions lie at residues 575 to 611 (GPPSTPKHKKSQKGSAFTFPSQQSPRNEPYVARPSTS) and 764 to 872 (ADLQ…NKPI). Polar residues-rich tracts occupy residues 587 to 600 (KGSAFTFPSQQSPR) and 843 to 872 (DPFTPSGSMPLSSTGDGISDSVWTPSNKPI).

The protein belongs to the potassium channel family. KQT (TC 1.A.1.15) subfamily. Kv7.3/KCNQ3 sub-subfamily. As to quaternary structure, heterotetramer with KCNQ2; forms heterotetrameric native M-channel responsible for the M-current. Interacts with calmodulin; the interaction is calcium-independent, constitutive and participates in the proper assembly of a functional M-channel. Heteromultimer with KCNQ5. May associate with KCNE2. Interacts with IQCJ-SCHIP1. Interacts (via the pore module) with SLC5A3/SMIT1; forms a coregulatory complex that alters ion selectivity, voltage dependence and gating kinetics of the channel. In terms of processing, KCNQ2/KCNQ3 are ubiquitinated by NEDD4L. Ubiquitination leads to protein degradation. Degradation induced by NEDD4L is inhibited by USP36. As to expression, predominantly expressed in brain.

The protein resides in the cell membrane. It carries out the reaction K(+)(in) = K(+)(out). It catalyses the reaction Rb(+)(in) = Rb(+)(out). The catalysed reaction is Cs(+)(in) = Cs(+)(out). The enzyme catalyses Na(+)(in) = Na(+)(out). With respect to regulation, phosphatidylinositol-4,5-bisphosphate (PIP2) potentiates the activation of KCNQ channels by enhancing the electro-mechanical coupling of the voltage-sensing domain (VSD) and the pore-forming domain (PD). In the closed state of the channel, PIP2 is anchored at the S2-S3 loop; upon channel activation, PIP2 interacts with the S4-S5 linker and is involved in channel gating. Calcium suppresses KCNQ2-KCNQ3 channel currents, with calcium-bound calmodulin inducing a change in channel configuration which leads to the reduction of channel affinity for PIP2 and subsequent current suppression. M-channel is activated by the anticonvulsant retigabine. In terms of biological role, pore-forming subunit of the voltage-gated potassium (Kv) M-channel which is responsible for the M-current, a key controller of neuronal excitability. M-channel is composed of pore-forming subunits KCNQ2 and KCNQ3 assembled as heterotetramers. The native M-current has a slowly activating and deactivating potassium conductance which plays a critical role in determining the subthreshold electrical excitability of neurons as well as the responsiveness to synaptic inputs. M-channel is selectively permeable in vitro to other cations besides potassium, in decreasing order of affinity K(+) &gt; Rb(+) &gt; Cs(+) &gt; Na(+). M-channel association with SLC5A3/SMIT1 alters channel ion selectivity, increasing Na(+) and Cs(+) permeation relative to K(+). Suppressed by activation of M1 muscarinic acetylcholine receptors. KCNQ3 also associates with KCNQ5 to form a functional channel in vitro and may also contribute to the M-current in brain. The sequence is that of Potassium voltage-gated channel subfamily KQT member 3 from Homo sapiens (Human).